The chain runs to 321 residues: Lipoyl synthase (321 aa).

Residues Cys-68, Cys-73, Cys-79, Cys-94, Cys-98, Cys-101, and Ser-308 each contribute to the [4Fe-4S] cluster site. In terms of domain architecture, Radical SAM core spans 80–297; it reads FNHGTATFMI…KELAESIGFT (218 aa).

The protein belongs to the radical SAM superfamily. Lipoyl synthase family. It depends on [4Fe-4S] cluster as a cofactor.

The protein localises to the cytoplasm. The catalysed reaction is [[Fe-S] cluster scaffold protein carrying a second [4Fe-4S](2+) cluster] + N(6)-octanoyl-L-lysyl-[protein] + 2 oxidized [2Fe-2S]-[ferredoxin] + 2 S-adenosyl-L-methionine + 4 H(+) = [[Fe-S] cluster scaffold protein] + N(6)-[(R)-dihydrolipoyl]-L-lysyl-[protein] + 4 Fe(3+) + 2 hydrogen sulfide + 2 5'-deoxyadenosine + 2 L-methionine + 2 reduced [2Fe-2S]-[ferredoxin]. Its pathway is protein modification; protein lipoylation via endogenous pathway; protein N(6)-(lipoyl)lysine from octanoyl-[acyl-carrier-protein]: step 2/2. In terms of biological role, catalyzes the radical-mediated insertion of two sulfur atoms into the C-6 and C-8 positions of the octanoyl moiety bound to the lipoyl domains of lipoate-dependent enzymes, thereby converting the octanoylated domains into lipoylated derivatives. This Shewanella halifaxensis (strain HAW-EB4) protein is Lipoyl synthase.